A 710-amino-acid chain; its full sequence is Solute carrier organic anion transporter family member 3A1 (710 aa).

An N-acetylmethionine modification is found at M1. The span at M1–S15 shows a compositional bias: gly residues. The disordered stretch occupies residues M1 to R25. The Cytoplasmic segment spans residues M1–K40. A helical transmembrane segment spans residues I41 to L60. Topologically, residues V61 to G79 are extracellular. The chain crosses the membrane as a helical span at residues V80–G100. Topologically, residues A101–P106 are cytoplasmic. A helical transmembrane segment spans residues R107–H131. The Extracellular segment spans residues Q132–N174. N-linked (GlcNAc...) asparagine glycans are attached at residues N153 and N169. A helical transmembrane segment spans residues M175–D203. Residues D204 to L222 are Cytoplasmic-facing. Residues V223–A243 form a helical membrane-spanning segment. Over V244–I261 the chain is Extracellular. The helical transmembrane segment at G262 to P286 threads the bilayer. Topologically, residues Q287 to H344 are cytoplasmic. The helical transmembrane segment at L345 to A366 threads the bilayer. The Extracellular portion of the chain corresponds to G367–S386. N-linked (GlcNAc...) asparagine glycosylation occurs at N381. A helical membrane pass occupies residues A387–V410. The Cytoplasmic portion of the chain corresponds to K411–S414. A helical membrane pass occupies residues L415 to F438. Topologically, residues L439 to F539 are extracellular. The N-linked (GlcNAc...) asparagine glycan is linked to N457. In terms of domain architecture, Kazal-like spans L465–T513. 3 disulfides stabilise this stretch: C471-C501, C477-C497, and C486-C511. N502, N505, and N519 each carry an N-linked (GlcNAc...) asparagine glycan. The helical transmembrane segment at L540 to I562 threads the bilayer. Residues R563–S571 lie on the Cytoplasmic side of the membrane. The helical transmembrane segment at Y572–I597 threads the bilayer. Topologically, residues D598 to A630 are extracellular. The helical transmembrane segment at I631 to L648 threads the bilayer. Over R649–N705 the chain is Cytoplasmic.

It belongs to the organo anion transporter (TC 2.A.60) family. Generally the expression of isoform 1 is higher than that of isoform 2. In terms of tissue distribution, expressed in placental trophoblasts. Expressed in pancreas, kidney, liver, lung, brain, heart, cerebellum, peripheral blood leukocyte, colon, small intestine, ovary, testis, prostate, thyroid, thymus and spleen. Expressed in fetal brain, heart, kidney, liver, lung, skeletal muscle, spleen and pancreas. In testis, detected in spermatogonia at different stages and absent from Sertoli cells. Expressed in the choroid plexus epithelium, at the basolateral membrane. In brain, also very abundant in the gray matter of the frontal cortex, but not associated with neuronal cell bodies. Not detected in the white matter. As to expression, expressed in heart, brain, cerebellum, testis, lung, thyroid, spoleen and liver. In testis, primarily localized to the basal membrane of Sertoli cells and weakly expressed within the tubules. In testis, also present in spermatogonia at different stages. In brain, expressed in the choroid plexus epithelium, at the apical membrane as well as in the subapical intracellular vesicular compartments. In brain, also associated with neuronal bodies and axons in both the gray and the white matters of the frontal cortex.

It localises to the basolateral cell membrane. Its subcellular location is the apical cell membrane. The protein resides in the basal cell membrane. The catalysed reaction is L-thyroxine(out) = L-thyroxine(in). The enzyme catalyses prostaglandin E1(out) = prostaglandin E1(in). It carries out the reaction prostaglandin E2(out) = prostaglandin E2(in). It catalyses the reaction prostaglandin F2alpha(out) = prostaglandin F2alpha(in). The catalysed reaction is (5Z,8Z,11Z,14Z)-eicosatetraenoate(out) = (5Z,8Z,11Z,14Z)-eicosatetraenoate(in). The enzyme catalyses taurocholate(out) = taurocholate(in). It carries out the reaction glycocholate(out) = glycocholate(in). It catalyses the reaction estrone 3-sulfate(out) = estrone 3-sulfate(in). The catalysed reaction is argipressin(out) = argipressin(in). Its activity is regulated as follows. Stimulated by extracellular acidic pH. Its function is as follows. Putative organic anion antiporter with apparent broad substrate specificity. Recognizes various substrates including thyroid hormone L-thyroxine, prostanoids such as prostaglandin E1 and E2, bile acids such as taurocholate, glycolate and glycochenodeoxycholate and peptide hormones such as L-arginine vasopressin, likely operating in a tissue-specific manner. The transport mechanism, its electrogenicity and potential tissue-specific counterions remain to be elucidated. The protein is Solute carrier organic anion transporter family member 3A1 (SLCO3A1) of Homo sapiens (Human).